A 645-amino-acid chain; its full sequence is MSMACYYLAAAAAGLALLLLHAPLTDAQTLVPLCGDSGNYTEHGTYHANIQYLATSLPSYASSSPSLFASGSSGTVPDAIYALALCRGDTNSSSCATCVAAAIQSAQELCPLVKTVIVYDDTCILRFANDAFPISPTSNSQGMVVAWKAQNVSAAVAPAFEAAVVRLINTTADYAATDSVRRFGTGEEAFDETTFPKIYSLAQCTPDMAATACRSCLEDIVGRMVSGNLIGRMGGRVLGVRCNLWFEVYPFFSGRSLLQLPGPSPSPAPPVTAAGERSKNKRSAILAISMPTIALVLATIAAWFCSTSWRRRRLARKTLRPKSSEDEMQSFASLVLDLQTLRTATDNFSEHKRLGEGGFGVVYKGDLPEGQEIAVKRLAQTSRQGIEELKTELLLVAKLNHNNLVRLIGVCLEENEKILAYEYMPNRSLDTILFDAERIKELDWGQRFKIINGIARGLQYLHEDSQLKIVHRDLKASNVLLDSAYNPKISDFGLAKIFERDQSQVITHRIAGTYGYMSPEYAMRGQYSMKLDVYSFGVLVLEIITGRRNFGSYGSDHVVDLIYVTWEHWTSDKAIELIDPSLGNHYPVDKVLKCIHIGLLCVQPKPADRPLMSAVNAMLSSTGTVRLPCLSRPSFWVQEIGATAS.

The first 27 residues, 1 to 27 (MSMACYYLAAAAAGLALLLLHAPLTDA), serve as a signal peptide directing secretion. Gnk2-homologous domains are found at residues 28–132 (QTLV…NDAF) and 140–251 (SQGM…VYPF). Residues 28–283 (QTLVPLCGDS…AGERSKNKRS (256 aa)) lie on the Extracellular side of the membrane. N-linked (GlcNAc...) asparagine glycosylation is found at N39 and N91. 2 disulfides stabilise this stretch: C86–C95 and C98–C123. Residues N151 and N169 are each glycosylated (N-linked (GlcNAc...) asparagine). Intrachain disulfides connect C204–C213 and C216–C242. Residues 284 to 304 (AILAISMPTIALVLATIAAWF) traverse the membrane as a helical segment. Over 305 to 645 (CSTSWRRRRL…WVQEIGATAS (341 aa)) the chain is Cytoplasmic. A Protein kinase domain is found at 348–619 (FSEHKRLGEG…PLMSAVNAML (272 aa)). Residues 354–362 (LGEGGFGVV) and K376 contribute to the ATP site. The active-site Proton acceptor is the D473.

It belongs to the protein kinase superfamily. Ser/Thr protein kinase family. CRK subfamily.

It is found in the membrane. Functionally, involved in disease resistance. Required for NPR1/NH1-mediated immunity to the bacterial blight pathogen Xanthomomas oryzae pv. oryzae (Xoo). Required for the benzothiadiazole (BTH)-induced immune response. Probably regulated by the transcription factor TGA2.1. In Oryza sativa subsp. japonica (Rice), this protein is Cysteine-rich receptor-like protein kinase 10.